Here is a 25-residue protein sequence, read N- to C-terminus: AKKRAGNGCFGLKLDRIGSMSGLGC.

An intrachain disulfide couples C9 to C25.

In terms of tissue distribution, venom gland.

The protein resides in the secreted. In terms of biological role, snake venom natriuretic peptide that has a vasorelaxant activity in rat aortic strips and a diuretic potency in anesthetized rats. May act by activating natriuretic receptors (NPR1 and/or NPR2). In Crotalus atrox (Western diamondback rattlesnake), this protein is C-type natriuretic peptide.